Reading from the N-terminus, the 75-residue chain is Penaeidin-3n (75 aa).

The first 19 residues, 1–19, serve as a signal peptide directing secretion; the sequence is MRLVVCLVFLASFALVCQG. Position 20 is a pyrrolidone carboxylic acid (Gln20). Intrachain disulfides connect Cys44–Cys59 and Cys48–Cys66. At Ser74 the chain carries Serine amide.

It belongs to the penaeidin family.

It is found in the cytoplasmic granule. Antibacterial and antifungal activity. Presents chitin-binding activity. This is Penaeidin-3n from Penaeus setiferus (Atlantic white shrimp).